A 1078-amino-acid polypeptide reads, in one-letter code: Rho family-interacting cell polarization regulator 2 (1078 aa).

Phosphoserine is present on residues Ser46 and Ser62. The involved in cell filopodia formation stretch occupies residues 80–138; it reads MHNLGHKNNNTPKEPQPKRVEEVYRALKNGLDEYLEFHQTELDKLTAQLKDMKRNSRLG. The stretch at 108-137 forms a coiled coil; that stretch reads NGLDEYLEFHQTELDKLTAQLKDMKRNSRL. Residue Ser366 is modified to Phosphoserine. The segment covering 488–508 has biased composition (polar residues); that stretch reads SSLSSQNEGTEDSSSASSRNS. A disordered region spans residues 488–534; it reads SSLSSQNEGTEDSSSASSRNSLGEDHEPKSHPKSDTVEPGKPGVATR. A compositionally biased stretch (basic and acidic residues) spans 509 to 525; sequence LGEDHEPKSHPKSDTVE. Ser582 carries the phosphoserine modification.

This sequence belongs to the RIPOR family. As to quaternary structure, homooligomer; homooligomerization is regulated by RHOC and leads to the formation of concatemers through the association of N- and C-termini. Interacts (phosphorylated form) with 14-3-3 proteins; these interactions occur during myogenic cell differentiation and also induces T cell proliferation arrest. Interacts (phosphorylated form) with HDAC6; this interaction occurs during early myogenic differentiation, prevents HDAC6 to deacetylate tubulin and also induces T cell proliferation arrest. Interacts with DYSF; this interaction occurs during early myogenic differentiation. Interacts with MYOF. Interacts (via active GTP- or inactive GDP-bound forms) with RHOA; this interaction is direct, blocks the loading of GTP to RHOA and decreases upon chemokine CCL19 stimulation in primary T lymphocytes. Interacts with RHOC. Interacts (via phosphorylated form) with YWHAB; this interaction occurs in a chemokine-dependent manner and does not compete for binding of RIPOR2 with RHOA nor blocks inhibition of RIPOR2-mediated RHOA activity. Interacts with YWHAE. Interacts with YWHAQ. Phosphorylated. Chemokine-induced phosphorylation in neutrophils occurs in a PKC- and AKT-dependent manner, resulting in RIPOR2 interaction with YWHAB and stabilization. Phosphorylated by PKCA, AKT1 and MAPKAPK1A; in vitro. Expressed in the cochlea. Expressed in inner hair cells and outer hair cells and Hensen's cells (at protein level). Expressed in the brain, cerebellum, spinal cord, retina, heart, spleen liver, kidney, bladder, muscle and lung. Expressed in the cochlea of the inner ear.

The protein localises to the cytoplasm. The protein resides in the cytoskeleton. It localises to the cell projection. It is found in the filopodium. Its subcellular location is the stereocilium. The protein localises to the stereocilium membrane. The protein resides in the apical cell membrane. Acts as an inhibitor of the small GTPase RHOA and plays several roles in the regulation of myoblast and hair cell differentiation, lymphocyte T proliferation and neutrophil polarization. Plays a role in fetal mononuclear myoblast differentiation by promoting filopodia and myotube formation. Maintains naive T lymphocytes in a quiescent state and prevents chemokine-induced T lymphocyte responses, such as cell adhesion, polarization and migration. Involved also in the regulation of neutrophil polarization, chemotaxis and adhesion. Required for normal development of inner and outer hair cell stereocilia within the cochlea of the inner ear. Plays a role for maintaining the structural organization of the basal domain of stereocilia. Involved in mechanosensory hair cell function. Required for normal hearing. In Mus musculus (Mouse), this protein is Rho family-interacting cell polarization regulator 2.